A 658-amino-acid polypeptide reads, in one-letter code: UvrABC system protein B (658 aa).

The Helicase ATP-binding domain occupies 26–414; it reads AGLKKGLKHQ…PDVIEQIIRP (389 aa). 39–46 provides a ligand contact to ATP; that stretch reads GATGTGKT. The Beta-hairpin motif lies at 92 to 115; it reads YYDYYQPEAYVPQSDTYIEKDASI. A Helicase C-terminal domain is found at 430–592; sequence QIDDLMDEIN…ITPKTIKKEI (163 aa). Residues 622 to 658 enclose the UVR domain; it reads DVFIEGMEHEMKEAAKALDFERAAELRDALLEIKAEG.

The protein belongs to the UvrB family. In terms of assembly, forms a heterotetramer with UvrA during the search for lesions. Interacts with UvrC in an incision complex.

The protein resides in the cytoplasm. The UvrABC repair system catalyzes the recognition and processing of DNA lesions. A damage recognition complex composed of 2 UvrA and 2 UvrB subunits scans DNA for abnormalities. Upon binding of the UvrA(2)B(2) complex to a putative damaged site, the DNA wraps around one UvrB monomer. DNA wrap is dependent on ATP binding by UvrB and probably causes local melting of the DNA helix, facilitating insertion of UvrB beta-hairpin between the DNA strands. Then UvrB probes one DNA strand for the presence of a lesion. If a lesion is found the UvrA subunits dissociate and the UvrB-DNA preincision complex is formed. This complex is subsequently bound by UvrC and the second UvrB is released. If no lesion is found, the DNA wraps around the other UvrB subunit that will check the other stand for damage. The protein is UvrABC system protein B of Listeria monocytogenes serotype 4b (strain F2365).